The sequence spans 273 residues: Dermonecrotic toxin SdSicTox-betaIF1 (273 aa).

H5 is a catalytic residue. Mg(2+)-binding residues include E25 and D27. H41 acts as the Nucleophile in catalysis. Intrachain disulfides connect C45–C51 and C47–C189.

It belongs to the arthropod phospholipase D family. Class II subfamily. Requires Mg(2+) as cofactor. As to expression, expressed by the venom gland.

The protein resides in the secreted. The catalysed reaction is an N-(acyl)-sphingosylphosphocholine = an N-(acyl)-sphingosyl-1,3-cyclic phosphate + choline. It catalyses the reaction an N-(acyl)-sphingosylphosphoethanolamine = an N-(acyl)-sphingosyl-1,3-cyclic phosphate + ethanolamine. It carries out the reaction a 1-acyl-sn-glycero-3-phosphocholine = a 1-acyl-sn-glycero-2,3-cyclic phosphate + choline. The enzyme catalyses a 1-acyl-sn-glycero-3-phosphoethanolamine = a 1-acyl-sn-glycero-2,3-cyclic phosphate + ethanolamine. Functionally, dermonecrotic toxins cleave the phosphodiester linkage between the phosphate and headgroup of certain phospholipids (sphingolipid and lysolipid substrates), forming an alcohol (often choline) and a cyclic phosphate. This toxin acts on sphingomyelin (SM). It may also act on ceramide phosphoethanolamine (CPE), lysophosphatidylcholine (LPC) and lysophosphatidylethanolamine (LPE), but not on lysophosphatidylserine (LPS), and lysophosphatidylglycerol (LPG). It acts by transphosphatidylation, releasing exclusively cyclic phosphate products as second products. Induces dermonecrosis, hemolysis, increased vascular permeability, edema, inflammatory response, and platelet aggregation. This is Dermonecrotic toxin SdSicTox-betaIF1 from Sicarius cf. damarensis (strain GJB-2008) (Six-eyed sand spider).